A 59-amino-acid polypeptide reads, in one-letter code: UPF0434 protein VIBHAR_01537 (59 aa).

This sequence belongs to the UPF0434 family.

In Vibrio campbellii (strain ATCC BAA-1116), this protein is UPF0434 protein VIBHAR_01537.